Here is a 355-residue protein sequence, read N- to C-terminus: UDP-N-acetylglucosamine--N-acetylmuramyl-(pentapeptide) pyrophosphoryl-undecaprenol N-acetylglucosamine transferase (355 aa).

Residues 15–17, asparagine 127, arginine 163, serine 191, isoleucine 244, 263–268, and glutamine 288 each bind UDP-N-acetyl-alpha-D-glucosamine; these read TGG and ALTVSE.

Belongs to the glycosyltransferase 28 family. MurG subfamily.

It is found in the cell inner membrane. The catalysed reaction is di-trans,octa-cis-undecaprenyl diphospho-N-acetyl-alpha-D-muramoyl-L-alanyl-D-glutamyl-meso-2,6-diaminopimeloyl-D-alanyl-D-alanine + UDP-N-acetyl-alpha-D-glucosamine = di-trans,octa-cis-undecaprenyl diphospho-[N-acetyl-alpha-D-glucosaminyl-(1-&gt;4)]-N-acetyl-alpha-D-muramoyl-L-alanyl-D-glutamyl-meso-2,6-diaminopimeloyl-D-alanyl-D-alanine + UDP + H(+). It functions in the pathway cell wall biogenesis; peptidoglycan biosynthesis. In terms of biological role, cell wall formation. Catalyzes the transfer of a GlcNAc subunit on undecaprenyl-pyrophosphoryl-MurNAc-pentapeptide (lipid intermediate I) to form undecaprenyl-pyrophosphoryl-MurNAc-(pentapeptide)GlcNAc (lipid intermediate II). This chain is UDP-N-acetylglucosamine--N-acetylmuramyl-(pentapeptide) pyrophosphoryl-undecaprenol N-acetylglucosamine transferase, found in Shigella flexneri serotype 5b (strain 8401).